A 415-amino-acid polypeptide reads, in one-letter code: Queuine tRNA-ribosyltransferase accessory subunit 2 (415 aa).

The Zn(2+) site is built by C351, C353, C356, and H382.

This sequence belongs to the queuine tRNA-ribosyltransferase family. QTRT2 subfamily. As to quaternary structure, heterodimer of a catalytic subunit qtrt1 and an accessory subunit qtrt2. Zn(2+) is required as a cofactor.

The protein localises to the cytoplasm. The protein resides in the mitochondrion outer membrane. Non-catalytic subunit of the queuine tRNA-ribosyltransferase (TGT) that catalyzes the base-exchange of a guanine (G) residue with queuine (Q) at position 34 (anticodon wobble position) in tRNAs with GU(N) anticodons (tRNA-Asp, -Asn, -His and -Tyr), resulting in the hypermodified nucleoside queuosine (7-(((4,5-cis-dihydroxy-2-cyclopenten-1-yl)amino)methyl)-7-deazaguanosine). This is Queuine tRNA-ribosyltransferase accessory subunit 2 from Xenopus laevis (African clawed frog).